A 178-amino-acid chain; its full sequence is ATP synthase subunit delta (178 aa).

It belongs to the ATPase delta chain family. F-type ATPases have 2 components, F(1) - the catalytic core - and F(0) - the membrane proton channel. F(1) has five subunits: alpha(3), beta(3), gamma(1), delta(1), epsilon(1). F(0) has three main subunits: a(1), b(2) and c(10-14). The alpha and beta chains form an alternating ring which encloses part of the gamma chain. F(1) is attached to F(0) by a central stalk formed by the gamma and epsilon chains, while a peripheral stalk is formed by the delta and b chains.

It is found in the cell inner membrane. Its function is as follows. F(1)F(0) ATP synthase produces ATP from ADP in the presence of a proton or sodium gradient. F-type ATPases consist of two structural domains, F(1) containing the extramembraneous catalytic core and F(0) containing the membrane proton channel, linked together by a central stalk and a peripheral stalk. During catalysis, ATP synthesis in the catalytic domain of F(1) is coupled via a rotary mechanism of the central stalk subunits to proton translocation. Functionally, this protein is part of the stalk that links CF(0) to CF(1). It either transmits conformational changes from CF(0) to CF(1) or is implicated in proton conduction. The polypeptide is ATP synthase subunit delta (Pseudomonas syringae pv. syringae (strain B728a)).